The following is a 368-amino-acid chain: UPF0284 protein Tery_1555 (368 aa).

This sequence belongs to the UPF0284 family.

The polypeptide is UPF0284 protein Tery_1555 (Trichodesmium erythraeum (strain IMS101)).